Reading from the N-terminus, the 180-residue chain is Large ribosomal subunit protein uL6 (180 aa).

This sequence belongs to the universal ribosomal protein uL6 family. In terms of assembly, part of the 50S ribosomal subunit.

This protein binds to the 23S rRNA, and is important in its secondary structure. It is located near the subunit interface in the base of the L7/L12 stalk, and near the tRNA binding site of the peptidyltransferase center. This Clostridium tetani (strain Massachusetts / E88) protein is Large ribosomal subunit protein uL6.